Consider the following 502-residue polypeptide: Glycerol kinase (502 aa).

Residue Thr-14 participates in ADP binding. Positions 14, 15, and 16 each coordinate ATP. Thr-14 lines the sn-glycerol 3-phosphate pocket. ADP is bound at residue Arg-18. Residues Arg-84, Glu-85, Tyr-136, and Asp-246 each coordinate sn-glycerol 3-phosphate. Glycerol is bound by residues Arg-84, Glu-85, Tyr-136, Asp-246, and Gln-247. ADP contacts are provided by Thr-268 and Gly-311. Thr-268, Gly-311, Gln-315, and Gly-412 together coordinate ATP. Residues Gly-412 and Asn-416 each coordinate ADP.

It belongs to the FGGY kinase family. In terms of assembly, homotetramer and homodimer (in equilibrium). Heterodimer with EIIA-Glc. Binds 1 zinc ion per glycerol kinase EIIA-Glc dimer. The zinc ion is important for dimerization.

It carries out the reaction glycerol + ATP = sn-glycerol 3-phosphate + ADP + H(+). The protein operates within polyol metabolism; glycerol degradation via glycerol kinase pathway; sn-glycerol 3-phosphate from glycerol: step 1/1. With respect to regulation, activity of this regulatory enzyme is affected by several metabolites. Allosterically and non-competitively inhibited by fructose 1,6-bisphosphate (FBP) and unphosphorylated phosphocarrier protein EIIA-Glc (III-Glc), an integral component of the bacterial phosphotransferase (PTS) system. Its function is as follows. Key enzyme in the regulation of glycerol uptake and metabolism. Catalyzes the phosphorylation of glycerol to yield sn-glycerol 3-phosphate. This chain is Glycerol kinase, found in Escherichia fergusonii (strain ATCC 35469 / DSM 13698 / CCUG 18766 / IAM 14443 / JCM 21226 / LMG 7866 / NBRC 102419 / NCTC 12128 / CDC 0568-73).